We begin with the raw amino-acid sequence, 366 residues long: Putative agmatine deiminase (366 aa).

The active-site Amidino-cysteine intermediate is the C357.

The protein belongs to the agmatine deiminase family.

It carries out the reaction agmatine + H2O = N-carbamoylputrescine + NH4(+). The chain is Putative agmatine deiminase from Lactococcus lactis subsp. lactis (strain IL1403) (Streptococcus lactis).